A 1759-amino-acid chain; its full sequence is Collagen alpha-1(IV) chain (1759 aa).

The signal sequence occupies residues 1–20 (MSRLSLLGLTAAVVLLSSFC). Residues 21-194 (QDRIHVDAAA…PGNSGYPGLK (174 aa)) constitute a propeptide, N-terminal propeptide (7S domain). Disordered regions lie at residues 51-245 (PGFG…GSYP), 269-415 (KGRD…GIDG), 548-596 (AGDP…PGLP), 618-650 (PAGI…GGPG), 666-720 (IDGK…RGIP), and 787-1522 (RGQQ…GTPG). Composition is skewed to low complexity over residues 104–116 (HPGL…LPGL), 140–153 (PPGQ…PGRP), and 278–293 (PGML…PGLK). Positions 195–1530 (GAKGDPGPYG…PGYPGSPGGW (1336 aa)) are triple-helical region. 3 stretches are compositionally biased toward gly residues: residues 324-345 (GEQG…GEPG), 360-370 (GPLGEGTGEAG), and 379-388 (GVQGGKGLPG). 2 stretches are compositionally biased toward low complexity: residues 399–411 (RGPV…PGQP) and 574–595 (MPGA…SPGL). Residues 833 to 848 (YPGPNGDAGAAGLPGP) show a composition bias toward low complexity. Gly residues predominate over residues 904 to 913 (GQDGGPGYSG). Low complexity-rich tracts occupy residues 1037 to 1047 (YPGQPGDVGYP), 1219 to 1232 (ENGD…DGQP), 1247 to 1271 (PGRD…PGQD), and 1281 to 1309 (QDGY…YGMP). Over residues 1310–1319 (GLPGGPGESG) the composition is skewed to gly residues. The span at 1341-1357 (LPGAPGVPGVEGVPGLE) shows a compositional bias: low complexity. Residues 1410–1422 (PRGDDGFPGRDGL) show a composition bias toward basic and acidic residues. Low complexity-rich tracts occupy residues 1423–1437 (DGLP…LPGP) and 1472–1482 (PPGKAGYPGAP). Over residues 1495–1504 (GMPGHGGDQG) the composition is skewed to gly residues. A Collagen IV NC1 domain is found at 1535–1759 (GFTFAKHSQT…SRCQVCLKNR (225 aa)). Disulfide bonds link Cys-1550–Cys-1641, Cys-1583–Cys-1638, Cys-1595–Cys-1601, Cys-1660–Cys-1755, Cys-1694–Cys-1752, and Cys-1706–Cys-1712. Met-1623 participates in a covalent cross-link: S-Lysyl-methionine sulfilimine (Met-Lys) (interchain with K-1741). An S-Lysyl-methionine sulfilimine (Lys-Met) (interchain with M-1623) cross-link involves residue Lys-1741.

This sequence belongs to the type IV collagen family. As to quaternary structure, trimers of two alpha 1(IV) and one alpha 2(IV) chain. Type IV collagen forms a mesh-like network linked through intermolecular interactions between 7S domains and between NC1 domains. In terms of processing, prolines at the third position of the tripeptide repeating unit (G-X-Y) are hydroxylated in some or all of the chains. Post-translationally, type IV collagens contain numerous cysteine residues which are involved in inter- and intramolecular disulfide bonding. 12 of these, located in the NC1 domain, are conserved in all known type IV collagens. The trimeric structure of the NC1 domains is stabilized by covalent bonds between Lys and Met residues.

It localises to the secreted. The protein resides in the extracellular space. Its subcellular location is the extracellular matrix. The protein localises to the basement membrane. In terms of biological role, collagen type IV is specific for basement membranes. Required to restrict presynaptic growth at the neuromuscular junctions (NMJ) in late larval stage and in adult motor neurons. May play a role in axon regeneration in embryos following injury in D-type motor neurons. This chain is Collagen alpha-1(IV) chain, found in Caenorhabditis elegans.